The chain runs to 201 residues: Cytochrome c oxidase assembly protein CtaG (201 aa).

At 1-13 (MTDQGENEKKQRR) the chain is on the cytoplasmic side. Residues 14–36 (SNATIAVACLSFFVCMIGAAYAS) form a helical; Signal-anchor for type II membrane protein membrane-spanning segment. Over 37-201 (VPLYRIFCQV…KAVGSTRNGG (165 aa)) the chain is Periplasmic.

The protein belongs to the COX11/CtaG family.

The protein localises to the cell inner membrane. Functionally, exerts its effect at some terminal stage of cytochrome c oxidase synthesis, probably by being involved in the insertion of the copper B into subunit I. This chain is Cytochrome c oxidase assembly protein CtaG, found in Brucella ovis (strain ATCC 25840 / 63/290 / NCTC 10512).